The primary structure comprises 732 residues: 1,4-alpha-glucan branching enzyme GlgB (732 aa).

Aspartate 415 acts as the Nucleophile in catalysis. Glutamate 468 serves as the catalytic Proton donor.

Belongs to the glycosyl hydrolase 13 family. GlgB subfamily. As to quaternary structure, monomer.

The catalysed reaction is Transfers a segment of a (1-&gt;4)-alpha-D-glucan chain to a primary hydroxy group in a similar glucan chain.. It participates in glycan biosynthesis; glycogen biosynthesis. Catalyzes the formation of the alpha-1,6-glucosidic linkages in glycogen by scission of a 1,4-alpha-linked oligosaccharide from growing alpha-1,4-glucan chains and the subsequent attachment of the oligosaccharide to the alpha-1,6 position. The sequence is that of 1,4-alpha-glucan branching enzyme GlgB from Nitrosomonas eutropha (strain DSM 101675 / C91 / Nm57).